Consider the following 315-residue polypeptide: Leukocidin-S subunit (315 aa).

A signal peptide spans Met1–Ala29.

It belongs to the aerolysin family. As to quaternary structure, leukocidin consists of two protein components: F and S.

Its function is as follows. Leukocidin causes cytotoxic changes in polymorphonuclear leukocytes. This Staphylococcus aureus protein is Leukocidin-S subunit (lukS).